The sequence spans 284 residues: MEAIKKKMQAMKLEKDNAMDKADALEAQARDANRKADKILEEVQDLKKKPSQVETDFTTTKENLATANKNLEDKEKTLTNTESEVASLNRKVQMIEENLERSEERLGTALTKLGEASHAADEASRMCKVLENRSQQDEERMDQLTNQLKEARMLAEDADGKSDEVSRKMAQVEDDLEVAEDRVKSGDSKIMELEEELKVVGNSLKSLEVSEEKANQRVEEYKRQIKTLTVKLKEAEARAEYAEKYVKKLQKEVDRLEDELGINKDRYRALADEMDQTFAELSGY.

A coiled-coil region spans residues 1-273; sequence MEAIKKKMQA…KDRYRALADE (273 aa). Basic and acidic residues predominate over residues 155-171; that stretch reads AEDADGKSDEVSRKMAQ. The segment at 155–187 is disordered; sequence AEDADGKSDEVSRKMAQVEDDLEVAEDRVKSGD.

Belongs to the tropomyosin family. Homodimer.

Its function is as follows. Tropomyosin, in association with the troponin complex, plays a central role in the calcium dependent regulation of muscle contraction. In Lepisma saccharinum (Silverfish), this protein is Tropomyosin Lep s 1.0101.